Here is a 203-residue protein sequence, read N- to C-terminus: Small ribosomal subunit protein uS5 (203 aa).

Residues 51–114 (LEDEVLDITM…ENAKLNVVRI (64 aa)) enclose the S5 DRBM domain.

It belongs to the universal ribosomal protein uS5 family. In terms of assembly, part of the 30S ribosomal subunit. Contacts protein S4.

Its function is as follows. With S4 and S12 plays an important role in translational accuracy. This is Small ribosomal subunit protein uS5 from Methanothrix thermoacetophila (strain DSM 6194 / JCM 14653 / NBRC 101360 / PT) (Methanosaeta thermophila).